The sequence spans 551 residues: RanBD1 domain-containing protein C584.03c (551 aa).

Positions 1–309 constitute a RanBD1 domain; it reads MDELLNVASH…LLLKYADDET (309 aa). Serine 441 bears the Phosphoserine mark. The segment at 522–551 is disordered; it reads SVIPHSEPESSSKVINCQAKLNVEKEKKNP.

It localises to the nucleus. This Schizosaccharomyces pombe (strain 972 / ATCC 24843) (Fission yeast) protein is RanBD1 domain-containing protein C584.03c.